Consider the following 262-residue polypeptide: Glutamate racemase (262 aa).

Residues 5 to 6 (DS) and 37 to 38 (YG) contribute to the substrate site. C69 (proton donor/acceptor) is an active-site residue. 70-71 (NT) is a binding site for substrate. C181 (proton donor/acceptor) is an active-site residue. Substrate is bound at residue 182–183 (TH).

Belongs to the aspartate/glutamate racemases family.

It carries out the reaction L-glutamate = D-glutamate. Its pathway is cell wall biogenesis; peptidoglycan biosynthesis. Provides the (R)-glutamate required for cell wall biosynthesis. The chain is Glutamate racemase from Buchnera aphidicola subsp. Acyrthosiphon pisum (strain Tuc7).